The chain runs to 508 residues: UTP--glucose-1-phosphate uridylyltransferase (508 aa).

Ser-2 carries the N-acetylserine modification. Ser-2 and Ser-13 each carry phosphoserine. UTP is bound by residues Leu-113–Gly-116, Lys-127, Gln-190, and Gly-222. Gly-115–Gly-116 contributes to the substrate binding site. Lys-127 is a Mg(2+) binding site. Residues His-223, Asn-251–Asp-253, and Asn-330 contribute to the substrate site. Asp-253 serves as a coordination point for UTP. Asp-253 is a Mg(2+) binding site. UTP is bound at residue Lys-396. Lys-396 is an active-site residue. At Thr-426 the chain carries Phosphothreonine. The residue at position 434 (Ser-434) is a Phosphoserine. An N6-acetyllysine modification is found at Lys-438. Residues Ser-448 and Ser-461 each carry the phosphoserine modification. Residues His-457–His-508 form an oligomerization region. The segment at Asn-502–Leu-503 is critical for end-to-end subunit interaction.

Belongs to the UDPGP type 1 family. In terms of assembly, homooctamer. In terms of tissue distribution, highly expressed in various brain regions. Expressed in amygdala, anterior cingulate cortex, caudate, cerebellar hemisphere, cerebellum, cortex, frontal cortex, hippocampus, hypothalamus, nucleus accumbens, putamen, spinal cord and substantia nigra. Also widely expressed among other tissues, including liver, heart, placenta, lung, kidney, pancreas and skeletal muscle.

It is found in the cytoplasm. It catalyses the reaction alpha-D-glucose 1-phosphate + UTP + H(+) = UDP-alpha-D-glucose + diphosphate. It participates in glycan biosynthesis; glycogen biosynthesis. In terms of biological role, UTP--glucose-1-phosphate uridylyltransferase catalyzing the conversion of glucose-1-phosphate into UDP-glucose, a crucial precursor for the production of glycogen. This Homo sapiens (Human) protein is UTP--glucose-1-phosphate uridylyltransferase.